The sequence spans 185 residues: Adenine phosphoribosyltransferase (185 aa).

This sequence belongs to the purine/pyrimidine phosphoribosyltransferase family. In terms of assembly, homodimer.

It is found in the cytoplasm. It carries out the reaction AMP + diphosphate = 5-phospho-alpha-D-ribose 1-diphosphate + adenine. The protein operates within purine metabolism; AMP biosynthesis via salvage pathway; AMP from adenine: step 1/1. Its function is as follows. Catalyzes a salvage reaction resulting in the formation of AMP, that is energically less costly than de novo synthesis. The protein is Adenine phosphoribosyltransferase of Rubrobacter xylanophilus (strain DSM 9941 / JCM 11954 / NBRC 16129 / PRD-1).